Reading from the N-terminus, the 264-residue chain is S-adenosylmethionine decarboxylase proenzyme (264 aa).

S113 (schiff-base intermediate with substrate; via pyruvic acid) is an active-site residue. Residue S113 is modified to Pyruvic acid (Ser); by autocatalysis. The Proton acceptor; for processing activity role is filled by H118. The Proton donor; for catalytic activity role is filled by C141.

This sequence belongs to the prokaryotic AdoMetDC family. Type 2 subfamily. Heterooctamer of four alpha and four beta chains arranged as a tetramer of alpha/beta heterodimers. The cofactor is pyruvate. Post-translationally, is synthesized initially as an inactive proenzyme. Formation of the active enzyme involves a self-maturation process in which the active site pyruvoyl group is generated from an internal serine residue via an autocatalytic post-translational modification. Two non-identical subunits are generated from the proenzyme in this reaction, and the pyruvate is formed at the N-terminus of the alpha chain, which is derived from the carboxyl end of the proenzyme. The post-translation cleavage follows an unusual pathway, termed non-hydrolytic serinolysis, in which the side chain hydroxyl group of the serine supplies its oxygen atom to form the C-terminus of the beta chain, while the remainder of the serine residue undergoes an oxidative deamination to produce ammonia and the pyruvoyl group blocking the N-terminus of the alpha chain.

It carries out the reaction S-adenosyl-L-methionine + H(+) = S-adenosyl 3-(methylsulfanyl)propylamine + CO2. It participates in amine and polyamine biosynthesis; S-adenosylmethioninamine biosynthesis; S-adenosylmethioninamine from S-adenosyl-L-methionine: step 1/1. Catalyzes the decarboxylation of S-adenosylmethionine to S-adenosylmethioninamine (dcAdoMet), the propylamine donor required for the synthesis of the polyamines spermine and spermidine from the diamine putrescine. The protein is S-adenosylmethionine decarboxylase proenzyme of Hahella chejuensis (strain KCTC 2396).